The following is a 241-amino-acid chain: Tetraspanin-1 (241 aa).

3 helical membrane passes run 12–32 (ILFN…GIWV), 53–73 (FVNV…LGFL), and 89–109 (FFSI…VALV). Residue N154 is glycosylated (N-linked (GlcNAc...) asparagine). A helical transmembrane segment spans residues 212-232 (AVTVGGVAVGVAALELAAMVV).

The protein belongs to the tetraspanin (TM4SF) family. Interacts with SLC19A2. Interacts with NTRK1/TRKA.

Its subcellular location is the cell membrane. The protein resides in the lysosome membrane. In terms of biological role, structural component of specialized membrane microdomains known as tetraspanin-enriched microdomains (TERMs), which act as platforms for receptor clustering and signaling. Participates thereby in diverse biological functions such as cell signal transduction, adhesion, migration and protein trafficking. Regulates neuronal differentiation in response to NGF by facilitating NGF-mediated activation of NTRK1/TRKA receptor tyrosine kinase and subsequent downstream signaling pathways. Plays a role in the inhibition of TNFalpha-induced apoptosis. Mechanistically, inhibits the NF-kappa-B signaling pathway by blocking phosphorylation of CHUK. Also promotes the stability of the thiamine transporter 1/SLC19A2 in intestinal epithelial cells leading to an increase of thiamine uptake process. The polypeptide is Tetraspanin-1 (Tspan1) (Rattus norvegicus (Rat)).